The sequence spans 271 residues: Probable ribosomal RNA small subunit methyltransferase A (271 aa).

S-adenosyl-L-methionine is bound by residues H19, L21, G46, E67, D92, and N107.

It belongs to the class I-like SAM-binding methyltransferase superfamily. rRNA adenine N(6)-methyltransferase family. RsmA subfamily.

The protein resides in the cytoplasm. In terms of biological role, specifically dimethylates two adjacent adenosines in the loop of a conserved hairpin near the 3'-end of 16S rRNA in the 30S particle. May play a critical role in biogenesis of 30S subunits. This Methanosarcina mazei (strain ATCC BAA-159 / DSM 3647 / Goe1 / Go1 / JCM 11833 / OCM 88) (Methanosarcina frisia) protein is Probable ribosomal RNA small subunit methyltransferase A.